The chain runs to 95 residues: Neutrophil antibiotic peptide NP-4 (95 aa).

The signal sequence occupies residues 1–19; the sequence is MRTLALLAAILLVTLQAQA. The propeptide occupies 20–62; sequence ELHSGMADDGVDQQQPRAQDLDVAVYIKQDETSPLEVLGAKAG. 3 disulfides stabilise this stretch: Cys65-Cys93, Cys67-Cys82, and Cys72-Cys92.

It belongs to the alpha-defensin family.

It is found in the secreted. Microbicidal activity. The polypeptide is Neutrophil antibiotic peptide NP-4 (Oryctolagus cuniculus (Rabbit)).